The primary structure comprises 678 residues: Endopolyphosphatase (678 aa).

The Cytoplasmic segment spans residues 1–2; the sequence is MR. Residues 3 to 23 form a helical; Signal-anchor for type II membrane protein membrane-spanning segment; that stretch reads SPLLASLFALALSIASSEAAI. The Vacuolar portion of the chain corresponds to 24–678; the sequence is SSTEQVPLSG…ELMLVSTETD (655 aa). A disordered region spans residues 70 to 109; that stretch reads YKTGSTFDSGCHRKPKKDGKSEGKKATENERGNEDLDDKE. Over residues 87 to 103 the composition is skewed to basic and acidic residues; the sequence is DGKSEGKKATENERGNE. 3 N-linked (GlcNAc...) asparagine glycosylation sites follow: asparagine 138, asparagine 369, and asparagine 447. Positions 504–547 are disordered; it reads KGSGGHRHDVPKGDCSLPSNEDKPHCTFKRKPRHYSKRSPSRTN. The span at 529-543 shows a compositional bias: basic residues; the sequence is CTFKRKPRHYSKRSP. 2 N-linked (GlcNAc...) asparagine glycosylation sites follow: asparagine 591 and asparagine 616.

Belongs to the endopolyphosphatase PPN1 family. The cofactor is a divalent metal cation. In terms of processing, processing by proteases in the vacuole may be required for activation.

Its subcellular location is the vacuole membrane. The enzyme catalyses [phosphate](n+1) + n H2O = (n+1) phosphate + n H(+). Catalyzes the hydrolysis of inorganic polyphosphate (polyP) chains of many hundreds of phosphate residues into shorter lengths. This is Endopolyphosphatase (PPN1) from Cryptococcus neoformans var. neoformans serotype D (strain JEC21 / ATCC MYA-565) (Filobasidiella neoformans).